The chain runs to 160 residues: Transcription elongation factor GreA (160 aa).

The stretch at 12–76 (EGVKKLEEEL…QLENMLKNAS (65 aa)) forms a coiled coil.

It belongs to the GreA/GreB family.

Its function is as follows. Necessary for efficient RNA polymerase transcription elongation past template-encoded arresting sites. The arresting sites in DNA have the property of trapping a certain fraction of elongating RNA polymerases that pass through, resulting in locked ternary complexes. Cleavage of the nascent transcript by cleavage factors such as GreA or GreB allows the resumption of elongation from the new 3'terminus. GreA releases sequences of 2 to 3 nucleotides. In Clostridium botulinum (strain Hall / ATCC 3502 / NCTC 13319 / Type A), this protein is Transcription elongation factor GreA.